Here is a 390-residue protein sequence, read N- to C-terminus: Chalcone synthase (390 aa).

Cys-164 is a catalytic residue.

Belongs to the thiolase-like superfamily. Chalcone/stilbene synthases family.

The enzyme catalyses (E)-4-coumaroyl-CoA + 3 malonyl-CoA + 3 H(+) = 2',4,4',6'-tetrahydroxychalcone + 3 CO2 + 4 CoA. It participates in secondary metabolite biosynthesis; flavonoid biosynthesis. The primary product of this enzyme is 4,2',4',6'-tetrahydroxychalcone (also termed naringenin-chalcone or chalcone) which undergoes enzyme-catalyzed or spontaneous isomerization into naringenin. The chain is Chalcone synthase from Hypericum androsaemum (Tutsan).